The primary structure comprises 378 residues: Putative aminoglycoside phosphotransferase (378 aa).

ATP is bound by residues arginine 79 and 134–136; that span reads DYV. Residue aspartate 249 is the Proton acceptor of the active site. Mg(2+)-binding residues include asparagine 254, aspartate 267, and glutamate 269.

This sequence belongs to the aminoglycoside phosphotransferase family.

Functionally, might catalyze the phosphorylation of aminoglycosides and confer aminoglycoside antibiotics resistance. This Mycobacterium tuberculosis (strain CDC 1551 / Oshkosh) protein is Putative aminoglycoside phosphotransferase.